The chain runs to 138 residues: Large ribosomal subunit protein bL12c (138 aa).

The protein belongs to the bacterial ribosomal protein bL12 family. In terms of assembly, homodimer. Part of the ribosomal stalk of the 50S ribosomal subunit. Forms a multimeric L10(L12)X complex, where L10 forms an elongated spine to which 2 to 4 L12 dimers bind in a sequential fashion. Binds GTP-bound translation factors.

The protein localises to the plastid. Forms part of the ribosomal stalk which helps the ribosome interact with GTP-bound translation factors. Is thus essential for accurate translation. In Euglena longa (Euglenophycean alga), this protein is Large ribosomal subunit protein bL12c.